Reading from the N-terminus, the 430-residue chain is Tol-Pal system protein TolB (430 aa).

The N-terminal stretch at 1–26 (MSLMTKLGLRALVASCLIAAGGAAHA) is a signal peptide.

Belongs to the TolB family. As to quaternary structure, the Tol-Pal system is composed of five core proteins: the inner membrane proteins TolA, TolQ and TolR, the periplasmic protein TolB and the outer membrane protein Pal. They form a network linking the inner and outer membranes and the peptidoglycan layer.

The protein resides in the periplasm. Part of the Tol-Pal system, which plays a role in outer membrane invagination during cell division and is important for maintaining outer membrane integrity. This chain is Tol-Pal system protein TolB, found in Paraburkholderia phymatum (strain DSM 17167 / CIP 108236 / LMG 21445 / STM815) (Burkholderia phymatum).